A 441-amino-acid polypeptide reads, in one-letter code: Transcriptional regulatory protein ZraR (441 aa).

The Response regulatory domain occupies 7–121 (DILVVDDDVS…RLQETLEKAL (115 aa)). At aspartate 56 the chain carries 4-aspartylphosphate. Residues 141–370 (MIGSSPAMQH…LENAIERAVV (230 aa)) enclose the Sigma-54 factor interaction domain. Residues glycine 172, threonine 173, arginine 329, and arginine 359 each contribute to the ATP site. Positions 421–440 (KTEAARQLGITRKTLLAKLS) form a DNA-binding region, H-T-H motif.

Forms homohexamers in the crystal structure. However, the dimerization interface between DNA-binding domains observed in the crystal structure suggests that dodecamers, rather than hexamers, might be the functionally important oligomer. Phosphorylated by ZraS.

Its subcellular location is the cytoplasm. With respect to regulation, activity of the ZraS/ZraR two-component system is repressed by the zinc-bound form of ZraP, which probably interacts with the periplasmic region of ZraS. Its function is as follows. Part of the Zra signaling pathway, an envelope stress response (ESR) system composed of the periplasmic accessory protein ZraP, the histidine kinase ZraS and the transcriptional regulator ZraR. The ZraPSR system contributes to antibiotic resistance and is important for membrane integrity in the presence of membrane-targeting biocides. ZraR is a member of the two-component regulatory system ZraS/ZraR. When activated by ZraS, acts in conjunction with sigma-54 to regulate the expression of zraP in the presence of high Zn(2+) or Pb(2+) concentrations. Also positively autoregulates the expression of the zraSR operon. This chain is Transcriptional regulatory protein ZraR, found in Salmonella typhimurium (strain LT2 / SGSC1412 / ATCC 700720).